A 437-amino-acid chain; its full sequence is Probable receptor-like serine/threonine-protein kinase At4g34500 (437 aa).

Residues 25–45 form a helical membrane-spanning segment; it reads LVIAICSVFILLISLLIFLFV. A Protein kinase domain is found at 145 to 426; that stretch reads FSDDNMIGEG…MLEAEDFPFR (282 aa). Residues 151–159 and Lys173 each bind ATP; that span reads IGEGGYGVV. Residue Tyr220 is modified to Phosphotyrosine. Asp273 functions as the Proton acceptor in the catalytic mechanism. Position 277 is a phosphoserine (Ser277). Phosphothreonine occurs at positions 307 and 312. A Phosphotyrosine modification is found at Tyr320.

The protein belongs to the protein kinase superfamily. Ser/Thr protein kinase family.

It localises to the cell membrane. It carries out the reaction L-seryl-[protein] + ATP = O-phospho-L-seryl-[protein] + ADP + H(+). The enzyme catalyses L-threonyl-[protein] + ATP = O-phospho-L-threonyl-[protein] + ADP + H(+). The sequence is that of Probable receptor-like serine/threonine-protein kinase At4g34500 from Arabidopsis thaliana (Mouse-ear cress).